We begin with the raw amino-acid sequence, 249 residues long: 5'-nucleotidase SurE (249 aa).

A divalent metal cation contacts are provided by D8, D9, S39, and N91.

The protein belongs to the SurE nucleotidase family. A divalent metal cation is required as a cofactor.

The protein resides in the cytoplasm. It catalyses the reaction a ribonucleoside 5'-phosphate + H2O = a ribonucleoside + phosphate. In terms of biological role, nucleotidase that shows phosphatase activity on nucleoside 5'-monophosphates. In Magnetococcus marinus (strain ATCC BAA-1437 / JCM 17883 / MC-1), this protein is 5'-nucleotidase SurE.